A 127-amino-acid chain; its full sequence is Holo-[acyl-carrier-protein] synthase (127 aa).

Positions 9 and 58 each coordinate Mg(2+).

It belongs to the P-Pant transferase superfamily. AcpS family. Requires Mg(2+) as cofactor.

The protein localises to the cytoplasm. It catalyses the reaction apo-[ACP] + CoA = holo-[ACP] + adenosine 3',5'-bisphosphate + H(+). Functionally, transfers the 4'-phosphopantetheine moiety from coenzyme A to a Ser of acyl-carrier-protein. The chain is Holo-[acyl-carrier-protein] synthase from Shewanella sp. (strain MR-4).